The following is a 158-amino-acid chain: uncharacterized protein (158 aa).

The N-terminal stretch at 1–22 (MKKIPNKLLAVSAFLTITTTYA) is a signal peptide. A helical membrane pass occupies residues 120–140 (LTGIIEYDTKFENHYETLVEA).

The protein resides in the cell membrane. This is an uncharacterized protein from Bacillus cereus.